The primary structure comprises 176 residues: Probable DNA-directed RNA polymerase subunit delta (176 aa).

The region spanning 14–81 (KSFIDMAYTL…GENLWGLRDW (68 aa)) is the HTH HARE-type domain. Positions 114 to 176 (LGEDEMDDDD…VFEDEEDFND (63 aa)) are disordered. 2 stretches are compositionally biased toward acidic residues: residues 116–145 (EDEM…QVEE) and 153–176 (VIEE…DFND).

It belongs to the RpoE family. As to quaternary structure, RNAP is composed of a core of 2 alpha, a beta and a beta' subunits. The core is associated with a delta subunit and one of several sigma factors.

In terms of biological role, participates in both the initiation and recycling phases of transcription. In the presence of the delta subunit, RNAP displays an increased specificity of transcription, a decreased affinity for nucleic acids, and an increased efficiency of RNA synthesis because of enhanced recycling. The sequence is that of Probable DNA-directed RNA polymerase subunit delta from Staphylococcus aureus (strain JH1).